The following is a 610-amino-acid chain: Membrane protein insertase YidC (610 aa).

A helical transmembrane segment spans residues 7–27; the sequence is FFITIALSILILALWQVFYLG. Residues 36-82 form a disordered region; that stretch reads QARIEEQQRQAQQAAQNRQASSSTGDTPQMPANPDSIPGQGDTKAAG. A compositionally biased stretch (low complexity) spans 44-55; the sequence is RQAQQAAQNRQA. Helical transmembrane passes span 358-378, 387-407, 458-478, 510-530, and 546-566; these read FDLLIDWGWFYFITKPMFYLI, NFGVAILVVTVLLKALFFPLA, WPVLVQIPVFFALYKVLYVTI, TVPHFLMIGVWPIIMGIIMFL, and IFTWMPIIFTFMLASFPAGLV.

Belongs to the OXA1/ALB3/YidC family. Type 1 subfamily. In terms of assembly, interacts with the Sec translocase complex via SecD. Specifically interacts with transmembrane segments of nascent integral membrane proteins during membrane integration.

Its subcellular location is the cell inner membrane. Its function is as follows. Required for the insertion and/or proper folding and/or complex formation of integral membrane proteins into the membrane. Involved in integration of membrane proteins that insert both dependently and independently of the Sec translocase complex, as well as at least some lipoproteins. Aids folding of multispanning membrane proteins. The polypeptide is Membrane protein insertase YidC (Brucella melitensis biotype 1 (strain ATCC 23456 / CCUG 17765 / NCTC 10094 / 16M)).